The following is a 230-amino-acid chain: Ureidoacrylate amidohydrolase RutB (230 aa).

Aspartate 24 serves as the catalytic Proton acceptor. The active site involves lysine 133. Cysteine 166 functions as the Nucleophile in the catalytic mechanism.

The protein belongs to the isochorismatase family. RutB subfamily.

The catalysed reaction is (Z)-3-ureidoacrylate + H2O + H(+) = (Z)-3-aminoacrylate + NH4(+) + CO2. The enzyme catalyses (Z)-3-ureidoacrylate + H2O = (Z)-3-aminoacrylate + carbamate + H(+). It catalyses the reaction (Z)-2-methylureidoacrylate + H2O + H(+) = (Z)-2-methylaminoacrylate + NH4(+) + CO2. Hydrolyzes ureidoacrylate to form aminoacrylate and carbamate. The carbamate hydrolyzes spontaneously, thereby releasing one of the nitrogen atoms of the pyrimidine ring as ammonia and one of its carbon atoms as CO2. This is Ureidoacrylate amidohydrolase RutB from Escherichia coli O7:K1 (strain IAI39 / ExPEC).